The following is a 793-amino-acid chain: Putative dipeptidyl aminopeptidase C2E11.08 (793 aa).

Residues Met-1–Arg-24 lie on the Cytoplasmic side of the membrane. Residues Val-25–Val-45 traverse the membrane as a helical; Signal-anchor for type II membrane protein segment. Residues Ser-46–Asp-793 lie on the Lumenal side of the membrane. 11 N-linked (GlcNAc...) asparagine glycosylation sites follow: Asn-101, Asn-136, Asn-246, Asn-299, Asn-303, Asn-324, Asn-336, Asn-377, Asn-384, Asn-407, and Asn-535. Active-site charge relay system residues include Ser-647, Asp-722, and His-755. Residue Asn-761 is glycosylated (N-linked (GlcNAc...) asparagine).

It belongs to the peptidase S9B family.

It localises to the vacuole membrane. The protein is Putative dipeptidyl aminopeptidase C2E11.08 of Schizosaccharomyces pombe (strain 972 / ATCC 24843) (Fission yeast).